The following is a 522-amino-acid chain: Putative aminopeptidase W07G4.4 (522 aa).

Residues lysine 271 and aspartate 276 each contribute to the Zn(2+) site. Lysine 283 is a catalytic residue. Zn(2+)-binding residues include aspartate 294, aspartate 354, and glutamate 356. The active site involves arginine 358.

The protein belongs to the peptidase M17 family. Zn(2+) serves as cofactor.

The polypeptide is Putative aminopeptidase W07G4.4 (lap-2) (Caenorhabditis elegans).